Here is a 473-residue protein sequence, read N- to C-terminus: Flavin-dependent L-tryptophan oxidase RebO (473 aa).

The N-terminal stretch at Met1–Ala21 is a signal peptide. Residues Val15–Ala16, Glu35–Gly36, Arg43, Gly61–Arg64, Glu444, and Ala451–Ala456 each bind FAD.

This sequence belongs to the flavin monoamine oxidase family. RebO subfamily. Homodimer. The cofactor is FAD.

The enzyme catalyses 7-chloro-L-tryptophan + O2 = 3-(7-chloroindol-3-yl)-2-iminopropanoate + H2O2. It catalyses the reaction L-tryptophan + O2 = 2-iminio-3-(indol-3-yl)propanoate + H2O2. Involved in the biosynthesis of the indolocarbazole antitumor agent rebeccamycin. It generates the imine form of 7-chloroindole 3-pyruvate (7Cl-IPA) from 7-chloro-L-tryptophan (7Cl-Trp), with concomitant two-electron reduction of O(2) to H(2)O(2). The enzyme is also active with L-tryptophan as substrate. The polypeptide is Flavin-dependent L-tryptophan oxidase RebO (rebO) (Lentzea aerocolonigenes (Lechevalieria aerocolonigenes)).